Here is a 1005-residue protein sequence, read N- to C-terminus: Probable histidine kinase 4 (1005 aa).

At 1 to 37 the chain is on the cytoplasmic side; the sequence is MGVGGGGGGGGGEAAAAVAVEGDEAGKGRRWWRVKVK. A helical membrane pass occupies residues 38-58; sequence LSTVAVVAWVLASAALWAGLH. The Extracellular segment spans residues 59 to 333; the sequence is WRFRRAALHK…YRNKLHVSWS (275 aa). In terms of domain architecture, CHASE spans 110 to 321; sequence HPPALDQDTF…GDPLRKHQMV (212 aa). Residues 334–354 form a helical membrane-spanning segment; it reads AITTPSGVFVICMLVGYIIYA. Residues 355–1005 are Cytoplasmic-facing; sequence AWSRYDNVKE…QKFLGPCVSS (651 aa). The 287-residue stretch at 389-675 folds into the Histidine kinase domain; it reads TVSHEIRTPM…TFTFTAVLRR (287 aa). Phosphohistidine; by autocatalysis is present on histidine 392. Response regulatory domains lie at 700 to 829 and 862 to 999; these read SALL…FQAL and NILV…QKFL. Aspartate 912 carries the 4-aspartylphosphate modification.

Post-translationally, activation probably requires a transfer of a phosphate group between a His in the transmitter domain and an Asp of the receiver domain. Highly expressed in young leaves and spikelets, and at lower levels in roots, mature leaves and stems.

The protein resides in the cell membrane. The catalysed reaction is ATP + protein L-histidine = ADP + protein N-phospho-L-histidine.. Cytokinin receptor related to bacterial two-component regulators. Functions as a histidine kinase and transmits the stress signal to a downstream MAPK cascade. This Oryza sativa subsp. japonica (Rice) protein is Probable histidine kinase 4.